The chain runs to 296 residues: tRNA dimethylallyltransferase (296 aa).

ATP is bound at residue 2–9; it reads GPTASGKT. 4 to 9 contacts substrate; that stretch reads TASGKT. Interaction with substrate tRNA stretches follow at residues 27 to 30, 151 to 155, and 232 to 237; these read DSAL, QRLSR, and RCVGYR.

Belongs to the IPP transferase family. As to quaternary structure, monomer. Mg(2+) is required as a cofactor.

It carries out the reaction adenosine(37) in tRNA + dimethylallyl diphosphate = N(6)-dimethylallyladenosine(37) in tRNA + diphosphate. Catalyzes the transfer of a dimethylallyl group onto the adenine at position 37 in tRNAs that read codons beginning with uridine, leading to the formation of N6-(dimethylallyl)adenosine (i(6)A). This is tRNA dimethylallyltransferase from Shewanella sp. (strain ANA-3).